Consider the following 292-residue polypeptide: Protein LRATD1 (292 aa).

Ser38 carries the phosphoserine modification. Positions 133 to 228 constitute an LRAT domain; that stretch reads PATEQPAPAP…CRFGKREFKA (96 aa).

It belongs to the LRATD family.

The protein localises to the cytoplasm. May play a role in cell morphology and motility. In Mus musculus (Mouse), this protein is Protein LRATD1.